The chain runs to 352 residues: 2'-dehydrokanamycin reductase (352 aa).

It belongs to the NAD(P)-dependent epimerase/dehydratase family.

It catalyses the reaction 2'-dehydrokanamycin A + NADPH + H(+) = kanamycin A + NADP(+). It participates in antibiotic biosynthesis; kanamycin biosynthesis. In terms of biological role, mediates the conversion of 2'-dehydrokanamycin A into kanamycin A. In Streptomyces kanamyceticus, this protein is 2'-dehydrokanamycin reductase (kanK).